We begin with the raw amino-acid sequence, 409 residues long: UDP-N-acetylglucosamine--N-acetylmuramyl-(pentapeptide) pyrophosphoryl-undecaprenol N-acetylglucosamine transferase (409 aa).

Residues 11 to 13, N125, R169, S199, and Q299 each bind UDP-N-acetyl-alpha-D-glucosamine; that span reads TGG.

Belongs to the glycosyltransferase 28 family. MurG subfamily.

Its subcellular location is the cell membrane. The enzyme catalyses di-trans,octa-cis-undecaprenyl diphospho-N-acetyl-alpha-D-muramoyl-L-alanyl-D-glutamyl-meso-2,6-diaminopimeloyl-D-alanyl-D-alanine + UDP-N-acetyl-alpha-D-glucosamine = di-trans,octa-cis-undecaprenyl diphospho-[N-acetyl-alpha-D-glucosaminyl-(1-&gt;4)]-N-acetyl-alpha-D-muramoyl-L-alanyl-D-glutamyl-meso-2,6-diaminopimeloyl-D-alanyl-D-alanine + UDP + H(+). It participates in cell wall biogenesis; peptidoglycan biosynthesis. Its function is as follows. Cell wall formation. Catalyzes the transfer of a GlcNAc subunit on undecaprenyl-pyrophosphoryl-MurNAc-pentapeptide (lipid intermediate I) to form undecaprenyl-pyrophosphoryl-MurNAc-(pentapeptide)GlcNAc (lipid intermediate II). The sequence is that of UDP-N-acetylglucosamine--N-acetylmuramyl-(pentapeptide) pyrophosphoryl-undecaprenol N-acetylglucosamine transferase from Clostridioides difficile (strain 630) (Peptoclostridium difficile).